A 753-amino-acid polypeptide reads, in one-letter code: Neuroendocrine convertase 1 (753 aa).

An N-terminal signal peptide occupies residues Met-1–Ala-27. A propeptide spanning residues Lys-28–Arg-110 is cleaved from the precursor. The Peptidase S8 domain occupies Gln-129 to Val-450. Catalysis depends on Asp-167, which acts as the Charge relay system. A glycan (N-linked (GlcNAc...) asparagine) is linked at Asn-173. Catalysis depends on His-208, which acts as the Charge relay system. Cystine bridges form between Cys-225/Cys-374 and Cys-317/Cys-347. Ser-382 acts as the Charge relay system in catalysis. Asn-401 carries N-linked (GlcNAc...) asparagine glycosylation. The P/Homo B domain maps to Ser-460–Gln-597. A disulfide bridge links Cys-467 with Cys-494. Disordered stretches follow at residues Arg-617–Glu-657 and Ser-676–Ile-695.

The protein belongs to the peptidase S8 family. Furin subfamily. Requires Ca(2+) as cofactor.

Its subcellular location is the cytoplasmic vesicle. The protein resides in the secretory vesicle. It carries out the reaction Release of protein hormones, neuropeptides and renin from their precursors, generally by hydrolysis of -Lys-Arg-|- bonds.. Its function is as follows. Involved in the processing of hormone and other protein precursors at sites comprised of pairs of basic amino acid residues. Substrates include POMC, renin, enkephalin, dynorphin, somatostatin, insulin and AGRP. In Bos taurus (Bovine), this protein is Neuroendocrine convertase 1 (PCSK1).